The sequence spans 148 residues: Deoxyuridine 5'-triphosphate nucleotidohydrolase (148 aa).

Residues 68–70 (RSG), Asn81, 85–87 (TID), and Lys95 contribute to the substrate site.

This sequence belongs to the dUTPase family. Mg(2+) serves as cofactor.

The enzyme catalyses dUTP + H2O = dUMP + diphosphate + H(+). Its pathway is pyrimidine metabolism; dUMP biosynthesis; dUMP from dCTP (dUTP route): step 2/2. In terms of biological role, this enzyme is involved in nucleotide metabolism: it produces dUMP, the immediate precursor of thymidine nucleotides and it decreases the intracellular concentration of dUTP so that uracil cannot be incorporated into DNA. The polypeptide is Deoxyuridine 5'-triphosphate nucleotidohydrolase (Rickettsia typhi (strain ATCC VR-144 / Wilmington)).